The sequence spans 292 residues: (S)-phenoxypropionate/alpha-ketoglutarate-dioxygenase (292 aa).

Residues His108 and Asp110 each coordinate Fe cation. Residues Thr135 and Trp247 each coordinate 2-oxoglutarate. His262 is a Fe cation binding site. Arg273 is a binding site for 2-oxoglutarate.

It belongs to the TfdA dioxygenase family. In terms of assembly, monomer. The cofactor is Fe cation. L-ascorbate is required as a cofactor.

It catalyses the reaction (S)-2-(4-chloro-2-methylphenoxy)propanoate + 2-oxoglutarate + O2 = 2-methyl-4-chlorophenol + pyruvate + succinate + CO2. The catalysed reaction is (S)-(2,4-dichlorophenoxy)propanoate + 2-oxoglutarate + O2 = 2,4-dichlorophenol + pyruvate + succinate + CO2. It participates in xenobiotic degradation; 2-(2,4-dichlorophenoxy)propanoate degradation. Inhibited by divalent cations, most significantly by copper and nickel, and by diethylpyrocarbonate (DEPC). Its function is as follows. Involved in the degradation of the phenoxypropionate herbicides. Catalyzes the enantiospecific cleavage of the ether bond in the herbicid S-dichlorprop ((S)-2-(2,4-dichlorophenoxy)propionate)(S-2,4-DP) and S-mecoprop ((S)-2-(4-chloro-2-methylphenoxy)propionate)(S-2,4-MCPP). It can also accept (RS)-2-(4-chlorophenoxy)propionate, (RS)-2-(m-chlorophenoxy)propionate and phenoxyacetate derivatives such as 2,4-dichlorophenoxyacetate (2,4-D), however it can only accept 2-oxoglutarate as oxygen acceptor. In Delftia acidovorans (Pseudomonas acidovorans), this protein is (S)-phenoxypropionate/alpha-ketoglutarate-dioxygenase.